Here is a 207-residue protein sequence, read N- to C-terminus: Large ribosomal subunit protein uL4 (207 aa).

Residues 57–78 are disordered; it reads VAGGGKKPWRQKGTGRARHGSI. Residues 63 to 77 show a composition bias toward basic residues; that stretch reads KPWRQKGTGRARHGS.

This sequence belongs to the universal ribosomal protein uL4 family. Part of the 50S ribosomal subunit.

Its function is as follows. One of the primary rRNA binding proteins, this protein initially binds near the 5'-end of the 23S rRNA. It is important during the early stages of 50S assembly. It makes multiple contacts with different domains of the 23S rRNA in the assembled 50S subunit and ribosome. Functionally, forms part of the polypeptide exit tunnel. In Onion yellows phytoplasma (strain OY-M), this protein is Large ribosomal subunit protein uL4.